A 160-amino-acid polypeptide reads, in one-letter code: Small ribosomal subunit protein uS9 (160 aa).

This sequence belongs to the universal ribosomal protein uS9 family.

This chain is Small ribosomal subunit protein uS9, found in Cereibacter sphaeroides (strain ATCC 17029 / ATH 2.4.9) (Rhodobacter sphaeroides).